The chain runs to 259 residues: NAD kinase (259 aa).

The active-site Proton acceptor is the Asp43. NAD(+)-binding positions include Asp43 to Gly44, Asn111 to Glu112, and Arg136.

It belongs to the NAD kinase family. A divalent metal cation serves as cofactor.

The protein resides in the cytoplasm. It carries out the reaction NAD(+) + ATP = ADP + NADP(+) + H(+). Involved in the regulation of the intracellular balance of NAD and NADP, and is a key enzyme in the biosynthesis of NADP. Catalyzes specifically the phosphorylation on 2'-hydroxyl of the adenosine moiety of NAD to yield NADP. The polypeptide is NAD kinase (Mycoplasma genitalium (strain ATCC 33530 / DSM 19775 / NCTC 10195 / G37) (Mycoplasmoides genitalium)).